The sequence spans 373 residues: MSNQDFYATLGVARTATDDEIKKAYRKLAMKYHPDRNPDNKEAEEKFKEVQKAYETLSDKEKRAMYDQYGHAAFEGGGQGGFGGFGGFGGAQGFDFGDIFSQMFGGGSGRAQPDYQGEDVQVGIEITLEEAAKGVKKRINIPTYEACDVCNGSGAKPGTSPETCPTCKGSGTVHIQQAIFRMQQTCPTCHGAGKHIKEPCVKCRGAGRNKAVKTVEVNIPAGIDDGQRIRLSGEGGPGMHGAPAGDLYVTVRIRAHKIFQRDGLDLHCELPISFATAALGGELEVPTLDGKVKLTVPKETQTGRRMRVKGKGVKSLRSSATGDLYCHIVVETPVNLTDRQKELLEEFERISTGLENQTPRKKSFLDKLRDLFD.

A J domain is found at 5 to 70 (DFYATLGVAR…EKRAMYDQYG (66 aa)). The segment at 134-212 (GVKKRINIPT…CRGAGRNKAV (79 aa)) adopts a CR-type zinc-finger fold. Positions 147, 150, 164, 167, 186, 189, 200, and 203 each coordinate Zn(2+). CXXCXGXG motif repeat units lie at residues 147–154 (CDVCNGSG), 164–171 (CPTCKGSG), 186–193 (CPTCHGAG), and 200–207 (CVKCRGAG).

It belongs to the DnaJ family. Homodimer. It depends on Zn(2+) as a cofactor.

The protein localises to the cytoplasm. Participates actively in the response to hyperosmotic and heat shock by preventing the aggregation of stress-denatured proteins and by disaggregating proteins, also in an autonomous, DnaK-independent fashion. Unfolded proteins bind initially to DnaJ; upon interaction with the DnaJ-bound protein, DnaK hydrolyzes its bound ATP, resulting in the formation of a stable complex. GrpE releases ADP from DnaK; ATP binding to DnaK triggers the release of the substrate protein, thus completing the reaction cycle. Several rounds of ATP-dependent interactions between DnaJ, DnaK and GrpE are required for fully efficient folding. Also involved, together with DnaK and GrpE, in the DNA replication of plasmids through activation of initiation proteins. The protein is Chaperone protein DnaJ of Neisseria meningitidis serogroup C (strain 053442).